Reading from the N-terminus, the 574-residue chain is Developmental and secondary metabolism regulator veA (574 aa).

Disordered regions lie at residues 1 to 22, 39 to 60, 255 to 500, and 513 to 540; these read MATR…SRIT, ERAR…VDPP, RSSD…GAGK, and RSYE…YPRR. One can recognise a Velvet domain in the interval 25–230; the sequence is GKKLTYKLNV…AEQGCRVRIR (206 aa). The Nuclear localization signal motif lies at 39–44; sequence ERARAC. 2 stretches are compositionally biased toward pro residues: residues 314–323 and 330–341; these read RPLPPAPGPA and PAPPAPPAPPSH. Composition is skewed to polar residues over residues 343 to 353, 385 to 394, 406 to 415, and 448 to 458; these read PGYQSHLSFGS, HARNPSTSAE, RMSTERSSYP, and VAQSAAPRSQT. A PEST region spans residues 457-498; that stretch reads QTPSSSLVPSLPPLKALSGDYPNNLSQSSSSTSQSPSHDLGA. 2 stretches are compositionally biased toward low complexity: residues 459–474 and 482–493; these read PSSS…KALS and SQSSSSTSQSPS. The span at 513 to 525 shows a compositional bias: basic and acidic residues; sequence RSYEDSFGHDDRP.

It belongs to the velvet family. VeA subfamily. Component of the heterotrimeric velvet complex composed of laeA, veA and velB; VeA acting as a bridging protein between laeA and velB.

Its subcellular location is the nucleus. It is found in the cytoplasm. In terms of biological role, component of the velvet transcription factor complex that controls sexual/asexual developmental ratio in response to light, promoting sexual development in the darkness while stimulating asexual sporulation under illumination. The velvet complex hat acts as a global regulator for secondary metabolite gene expression. Controls the expression of the cyclopiazonic acid, aflatrem, and aflatoxin gene clusters. Controls the expression of the sclerotium-specific pigment asparasone A gene cluster. Controls the expression of the aflavarin gene cluster. also controls the production of hydrolases and other extracellular proteins during growth on natural starch-based substrates. Regulates genes involved in the High Osmolarity Glycerol (HOG) signaling pathway. Required for the conidial and sclerotial density-dependent production. This Aspergillus flavus (strain ATCC 200026 / FGSC A1120 / IAM 13836 / NRRL 3357 / JCM 12722 / SRRC 167) protein is Developmental and secondary metabolism regulator veA.